The primary structure comprises 434 residues: D-amino acid dehydrogenase (434 aa).

Residue 3-17 (VIVLGSGVIGTTTAY) participates in FAD binding.

The protein belongs to the DadA oxidoreductase family. Requires FAD as cofactor.

The catalysed reaction is a D-alpha-amino acid + A + H2O = a 2-oxocarboxylate + AH2 + NH4(+). Oxidative deamination of D-amino acids. The polypeptide is D-amino acid dehydrogenase (Bordetella bronchiseptica (strain ATCC BAA-588 / NCTC 13252 / RB50) (Alcaligenes bronchisepticus)).